The following is a 270-amino-acid chain: Elongation factor Ts (270 aa).

The interval 75 to 78 (TDFV) is involved in Mg(2+) ion dislocation from EF-Tu.

Belongs to the EF-Ts family.

Its subcellular location is the cytoplasm. Associates with the EF-Tu.GDP complex and induces the exchange of GDP to GTP. It remains bound to the aminoacyl-tRNA.EF-Tu.GTP complex up to the GTP hydrolysis stage on the ribosome. This Cutibacterium acnes (strain DSM 16379 / KPA171202) (Propionibacterium acnes) protein is Elongation factor Ts.